The following is a 118-amino-acid chain: Fluoride-specific ion channel FluC 2 (118 aa).

4 helical membrane passes run 1 to 21, 33 to 53, 55 to 75, and 91 to 111; these read MIEALLVATGGFFGAITRFAI, FPLATFLINITGAFLLGYIIG, GVTTGWQLLLGTGFMGAFTTF, and ISTFLLYLSATYIIGILFAFL. The Na(+) site is built by Gly-70 and Thr-73.

This sequence belongs to the fluoride channel Fluc/FEX (TC 1.A.43) family.

It is found in the cell membrane. The enzyme catalyses fluoride(in) = fluoride(out). Its activity is regulated as follows. Na(+) is not transported, but it plays an essential structural role and its presence is essential for fluoride channel function. Fluoride-specific ion channel. Important for reducing fluoride concentration in the cell, thus reducing its toxicity. In Bacillus cereus (strain ATCC 14579 / DSM 31 / CCUG 7414 / JCM 2152 / NBRC 15305 / NCIMB 9373 / NCTC 2599 / NRRL B-3711), this protein is Fluoride-specific ion channel FluC 2.